The sequence spans 242 residues: ATP synthase subunit a (242 aa).

A run of 6 helical transmembrane segments spans residues 29 to 49 (SSIY…LAFY), 84 to 104 (FIPL…LGMT), 114 to 134 (IIVT…VGFV), 140 to 160 (FLTL…MIVI), 189 to 209 (VIAG…IPLM), and 210 to 230 (VILI…FTIL).

The protein belongs to the ATPase A chain family. In terms of assembly, F-type ATPases have 2 components, CF(1) - the catalytic core - and CF(0) - the membrane proton channel. CF(1) has five subunits: alpha(3), beta(3), gamma(1), delta(1), epsilon(1). CF(0) has three main subunits: a(1), b(2) and c(9-12). The alpha and beta chains form an alternating ring which encloses part of the gamma chain. CF(1) is attached to CF(0) by a central stalk formed by the gamma and epsilon chains, while a peripheral stalk is formed by the delta and b chains.

Its subcellular location is the cell inner membrane. In terms of biological role, key component of the proton channel; it plays a direct role in the translocation of protons across the membrane. In Rickettsia felis (strain ATCC VR-1525 / URRWXCal2) (Rickettsia azadi), this protein is ATP synthase subunit a.